A 199-amino-acid chain; its full sequence is Recombination protein RecR (199 aa).

The C4-type zinc-finger motif lies at 58-73 (CKTCGNIDTQSPCTVC). Residues 81-176 (AMIVVVADVA…KVTRLAHGVP (96 aa)) enclose the Toprim domain.

This sequence belongs to the RecR family.

Its function is as follows. May play a role in DNA repair. It seems to be involved in an RecBC-independent recombinational process of DNA repair. It may act with RecF and RecO. This is Recombination protein RecR from Bradyrhizobium sp. (strain ORS 278).